A 173-amino-acid chain; its full sequence is Transcription factor E (173 aa).

The 84-residue stretch at 9–92 (NNPATRAYIH…LWQLRIDLLY (84 aa)) folds into the HTH TFE/IIEalpha-type domain.

It belongs to the TFE family. In terms of assembly, monomer. Interaction with RNA polymerase subunits RpoF and RpoE is necessary for Tfe stimulatory transcription activity. Able to interact with Tbp and RNA polymerase in the absence of DNA promoter. Interacts both with the preinitiation and elongation complexes.

Its function is as follows. Transcription factor that plays a role in the activation of archaeal genes transcribed by RNA polymerase. Facilitates transcription initiation by enhancing TATA-box recognition by TATA-box-binding protein (Tbp), and transcription factor B (Tfb) and RNA polymerase recruitment. Not absolutely required for transcription in vitro, but particularly important in cases where Tbp or Tfb function is not optimal. It dynamically alters the nucleic acid-binding properties of RNA polymerases by stabilizing the initiation complex and destabilizing elongation complexes. Seems to translocate with the RNA polymerase following initiation and acts by binding to the non template strand of the transcription bubble in elongation complexes. In Methanoregula boonei (strain DSM 21154 / JCM 14090 / 6A8), this protein is Transcription factor E.